We begin with the raw amino-acid sequence, 151 residues long: Globin-2 B chain (151 aa).

At serine 1 the chain carries N-acetylserine. The Globin domain occupies 11-151 (VSNADQKDLL…SLVAVVQASL (141 aa)). A heme b-binding site is contributed by histidine 103.

This sequence belongs to the globin family. In terms of assembly, heterotetramer of two alpha chains and two beta chains.

The sequence is that of Globin-2 B chain from Anadara inaequivalvis (Inequivalve ark).